Consider the following 132-residue polypeptide: Small ribosomal subunit protein uS8 (132 aa).

The protein belongs to the universal ribosomal protein uS8 family. In terms of assembly, part of the 30S ribosomal subunit. Contacts proteins S5 and S12.

One of the primary rRNA binding proteins, it binds directly to 16S rRNA central domain where it helps coordinate assembly of the platform of the 30S subunit. The polypeptide is Small ribosomal subunit protein uS8 (Geobacter metallireducens (strain ATCC 53774 / DSM 7210 / GS-15)).